The chain runs to 257 residues: Lipid A 4'-phosphatase (257 aa).

6 consecutive transmembrane segments (helical) span residues 21–41, 85–105, 119–139, 174–194, 201–221, and 225–245; these read FGAF…FRAF, IFFR…IECY, KLKV…NVIL, CSFV…LLFV, ALVP…LSFG, and LSDV…LLAL.

This sequence belongs to the lipid A LpxF 4'-phosphatase family.

The protein localises to the cell inner membrane. The protein operates within bacterial outer membrane biogenesis; LPS lipid A biosynthesis. Functionally, probably removes the 4'-phosphate moiety from lipid A species. Not seen to act on other membrane components, nor does it dephosphorylate the 1-phosphate group of lipid A and/or lipid A precursors. In Rhizobium etli (strain ATCC 51251 / DSM 11541 / JCM 21823 / NBRC 15573 / CFN 42), this protein is Lipid A 4'-phosphatase.